The sequence spans 545 residues: Glucans biosynthesis protein G (545 aa).

A signal peptide spans 1–34; that stretch reads MVSLLRCQSFKPSSSLICSLALSAAFALSSSAFA. Residues 38–60 are disordered; the sequence is KPAENKPATPVVSPPKATAQPAN.

It belongs to the OpgD/OpgG family.

The protein localises to the periplasm. The protein operates within glycan metabolism; osmoregulated periplasmic glucan (OPG) biosynthesis. Functionally, involved in the biosynthesis of osmoregulated periplasmic glucans (OPGs). This Shewanella sp. (strain ANA-3) protein is Glucans biosynthesis protein G.